The primary structure comprises 442 residues: Exodeoxyribonuclease 7 large subunit (442 aa).

The protein belongs to the XseA family. In terms of assembly, heterooligomer composed of large and small subunits.

The protein localises to the cytoplasm. The catalysed reaction is Exonucleolytic cleavage in either 5'- to 3'- or 3'- to 5'-direction to yield nucleoside 5'-phosphates.. Bidirectionally degrades single-stranded DNA into large acid-insoluble oligonucleotides, which are then degraded further into small acid-soluble oligonucleotides. This is Exodeoxyribonuclease 7 large subunit from Shewanella sediminis (strain HAW-EB3).